A 174-amino-acid chain; its full sequence is Small ribosomal subunit protein uS5 (174 aa).

Residues 17–80 (WQERVVQIRR…ADGKKHLIDV (64 aa)) form the S5 DRBM domain.

This sequence belongs to the universal ribosomal protein uS5 family. As to quaternary structure, part of the 30S ribosomal subunit. Contacts proteins S4 and S8.

Its function is as follows. With S4 and S12 plays an important role in translational accuracy. Functionally, located at the back of the 30S subunit body where it stabilizes the conformation of the head with respect to the body. This is Small ribosomal subunit protein uS5 from Thermosynechococcus vestitus (strain NIES-2133 / IAM M-273 / BP-1).